The chain runs to 216 residues: Pyrrolidone-carboxylate peptidase (216 aa).

Active-site residues include Glu80, Cys143, and His168.

It belongs to the peptidase C15 family. Homotetramer.

The protein resides in the cytoplasm. The enzyme catalyses Release of an N-terminal pyroglutamyl group from a polypeptide, the second amino acid generally not being Pro.. Its function is as follows. Removes 5-oxoproline from various penultimate amino acid residues except L-proline. In Cupriavidus taiwanensis (strain DSM 17343 / BCRC 17206 / CCUG 44338 / CIP 107171 / LMG 19424 / R1) (Ralstonia taiwanensis (strain LMG 19424)), this protein is Pyrrolidone-carboxylate peptidase.